The following is a 158-amino-acid chain: uncharacterized protein (158 aa).

A disordered region spans residues Met1–Ala26.

This is an uncharacterized protein from Homo sapiens (Human).